A 294-amino-acid chain; its full sequence is Acetyl-coenzyme A carboxylase carboxyl transferase subunit beta (294 aa).

Positions 25-294 constitute a CoA carboxyltransferase N-terminal domain; the sequence is VWTKCTSCEQ…PLVVPVDGSH (270 aa). Zn(2+)-binding residues include cysteine 29, cysteine 32, cysteine 48, and cysteine 51. The C4-type zinc-finger motif lies at 29–51; the sequence is CTSCEQVLYSAELERNLEVCPKC.

It belongs to the AccD/PCCB family. In terms of assembly, acetyl-CoA carboxylase is a heterohexamer composed of biotin carboxyl carrier protein (AccB), biotin carboxylase (AccC) and two subunits each of ACCase subunit alpha (AccA) and ACCase subunit beta (AccD). Zn(2+) serves as cofactor.

The protein resides in the cytoplasm. The enzyme catalyses N(6)-carboxybiotinyl-L-lysyl-[protein] + acetyl-CoA = N(6)-biotinyl-L-lysyl-[protein] + malonyl-CoA. It participates in lipid metabolism; malonyl-CoA biosynthesis; malonyl-CoA from acetyl-CoA: step 1/1. Functionally, component of the acetyl coenzyme A carboxylase (ACC) complex. Biotin carboxylase (BC) catalyzes the carboxylation of biotin on its carrier protein (BCCP) and then the CO(2) group is transferred by the transcarboxylase to acetyl-CoA to form malonyl-CoA. The sequence is that of Acetyl-coenzyme A carboxylase carboxyl transferase subunit beta from Aliivibrio fischeri (strain ATCC 700601 / ES114) (Vibrio fischeri).